We begin with the raw amino-acid sequence, 282 residues long: Bifunctional protein FolD (282 aa).

Residues 165-167 (GRG), Thr192, and Val233 contribute to the NADP(+) site.

This sequence belongs to the tetrahydrofolate dehydrogenase/cyclohydrolase family. As to quaternary structure, homodimer.

The catalysed reaction is (6R)-5,10-methylene-5,6,7,8-tetrahydrofolate + NADP(+) = (6R)-5,10-methenyltetrahydrofolate + NADPH. It catalyses the reaction (6R)-5,10-methenyltetrahydrofolate + H2O = (6R)-10-formyltetrahydrofolate + H(+). The protein operates within one-carbon metabolism; tetrahydrofolate interconversion. Its function is as follows. Catalyzes the oxidation of 5,10-methylenetetrahydrofolate to 5,10-methenyltetrahydrofolate and then the hydrolysis of 5,10-methenyltetrahydrofolate to 10-formyltetrahydrofolate. This chain is Bifunctional protein FolD, found in Mycobacterium leprae (strain Br4923).